A 246-amino-acid chain; its full sequence is 1-(5-phosphoribosyl)-5-[(5-phosphoribosylamino)methylideneamino] imidazole-4-carboxamide isomerase (246 aa).

Asp-12 acts as the Proton acceptor in catalysis. Residue Asp-134 is the Proton donor of the active site.

This sequence belongs to the HisA/HisF family.

It is found in the cytoplasm. The catalysed reaction is 1-(5-phospho-beta-D-ribosyl)-5-[(5-phospho-beta-D-ribosylamino)methylideneamino]imidazole-4-carboxamide = 5-[(5-phospho-1-deoxy-D-ribulos-1-ylimino)methylamino]-1-(5-phospho-beta-D-ribosyl)imidazole-4-carboxamide. The protein operates within amino-acid biosynthesis; L-histidine biosynthesis; L-histidine from 5-phospho-alpha-D-ribose 1-diphosphate: step 4/9. This chain is 1-(5-phosphoribosyl)-5-[(5-phosphoribosylamino)methylideneamino] imidazole-4-carboxamide isomerase, found in Haloarcula marismortui (strain ATCC 43049 / DSM 3752 / JCM 8966 / VKM B-1809) (Halobacterium marismortui).